The following is a 196-amino-acid chain: Probable calcium-binding protein CML32 (196 aa).

EF-hand domains lie at 30–65 (LNAV…LGLV), 121–156 (DEEE…LGLP), and 159–194 (GSLA…ITVW). Residues D43, N45, D47, E49, E54, D134, D136, D138, E145, D172, N174, D176, R178, and E183 each contribute to the Ca(2+) site.

Its function is as follows. Potential calcium sensor. The chain is Probable calcium-binding protein CML32 (CML32) from Oryza sativa subsp. japonica (Rice).